A 589-amino-acid polypeptide reads, in one-letter code: Ectoderm-neural cortex protein 1 (589 aa).

Residues 46–114 (TDVLLHAGNR…AYSSRVIINE (69 aa)) enclose the BTB domain. Kelch repeat units lie at residues 296–340 (ALFL…AIGC), 341–388 (KVYI…ELKH), 389–444 (CLYV…SAKL), 446–492 (LFAF…VLGN), 494–538 (IFIM…ASGN), and 539–585 (KLYV…STWK).

Binds to RB1. Hypophosphorylated RB1 associates with ENC1 during neuronal differentiation, while hyperphosphorylated RB1 associates with ENC1 in undifferentiating cells. Part of a complex that contains CUL3, RBX1 and ENC1. Interacts indirectly with KEAP1. Post-translationally, ubiquitinated by E3 ubiquitin ligase complex formed by CUL3 and RBX1 and probably targeted for proteasome-independent degradation. Quinone-induced oxidative stress increases its ubiquitination. As to expression, primarily expressed in the nervous system.

It localises to the nucleus matrix. The protein resides in the cytoplasm. Its subcellular location is the cytoskeleton. Its function is as follows. Actin-binding protein involved in the regulation of neuronal process formation and in differentiation of neural crest cells. Down-regulates transcription factor NF2L2/NRF2 by decreasing the rate of protein synthesis and not via a ubiquitin-mediated proteasomal degradation mechanism. This Mus musculus (Mouse) protein is Ectoderm-neural cortex protein 1 (Enc1).